The sequence spans 387 residues: Putative ribosomal RNA large subunit methyltransferase MJ1649 (387 aa).

The 77-residue stretch at 5–81 (LIKLEIDRRA…EEIDYDFFYK (77 aa)) folds into the PUA domain.

The protein belongs to the methyltransferase superfamily. RlmI family.

The protein resides in the cytoplasm. This Methanocaldococcus jannaschii (strain ATCC 43067 / DSM 2661 / JAL-1 / JCM 10045 / NBRC 100440) (Methanococcus jannaschii) protein is Putative ribosomal RNA large subunit methyltransferase MJ1649.